Reading from the N-terminus, the 158-residue chain is RNA pyrophosphohydrolase (158 aa).

In terms of domain architecture, Nudix hydrolase spans 6–150 (GYRLNVGIVL…KRDVYRKVMQ (145 aa)). The short motif at 39-60 (GGINIGETPEQAMYRELFEEIG) is the Nudix box element.

It belongs to the Nudix hydrolase family. RppH subfamily. A divalent metal cation is required as a cofactor.

In terms of biological role, accelerates the degradation of transcripts by removing pyrophosphate from the 5'-end of triphosphorylated RNA, leading to a more labile monophosphorylated state that can stimulate subsequent ribonuclease cleavage. This is RNA pyrophosphohydrolase from Blochmanniella pennsylvanica (strain BPEN).